Reading from the N-terminus, the 350-residue chain is Palmitoyltransferase erf2 (350 aa).

Residues Met1–Ala86 are Cytoplasmic-facing. Residues Phe87–Phe107 form a helical membrane-spanning segment. At Trp108–His112 the chain is on the lumenal side. Residues Val113 to Phe133 form a helical membrane-spanning segment. Residues Lys134–Arg225 are Cytoplasmic-facing. One can recognise a DHHC domain in the interval Val182–Leu232. Catalysis depends on Cys212, which acts as the S-palmitoyl cysteine intermediate. Residues Tyr226–Phe246 form a helical membrane-spanning segment. Residues Tyr247–Ala270 lie on the Lumenal side of the membrane. Residues Gly271–Phe291 form a helical membrane-spanning segment. The Cytoplasmic segment spans residues Cys292–Val350.

Belongs to the DHHC palmitoyltransferase family. ERF2/ZDHHC9 subfamily. As to quaternary structure, interacts with erf4. In terms of processing, autopalmitoylated.

The protein localises to the endoplasmic reticulum membrane. The protein resides in the golgi apparatus. Its subcellular location is the golgi stack membrane. It carries out the reaction L-cysteinyl-[protein] + hexadecanoyl-CoA = S-hexadecanoyl-L-cysteinyl-[protein] + CoA. Functionally, the erf2-erf4 complex is a palmitoyltransferase with a major role in driving sexual development. Palmitoylates ras1. Palmitoylates isp3. Palmitoylates rho3. In Schizosaccharomyces pombe (strain 972 / ATCC 24843) (Fission yeast), this protein is Palmitoyltransferase erf2.